A 145-amino-acid chain; its full sequence is Male-specific protein scotti (145 aa).

The interval Met-1–Asp-34 is disordered. Acidic residues predominate over residues Ile-12–Asp-21.

This sequence belongs to the male-specific scotti family.

Its function is as follows. Post-meiotically transcribed gene that has a role in late spermiogenesis; required for actin cone progression during spermatid individualization. This is Male-specific protein scotti from Drosophila willistoni (Fruit fly).